We begin with the raw amino-acid sequence, 410 residues long: Tryptophan synthase beta chain (410 aa).

N6-(pyridoxal phosphate)lysine is present on Lys100.

The protein belongs to the TrpB family. In terms of assembly, tetramer of two alpha and two beta chains. It depends on pyridoxal 5'-phosphate as a cofactor.

It catalyses the reaction (1S,2R)-1-C-(indol-3-yl)glycerol 3-phosphate + L-serine = D-glyceraldehyde 3-phosphate + L-tryptophan + H2O. Its pathway is amino-acid biosynthesis; L-tryptophan biosynthesis; L-tryptophan from chorismate: step 5/5. The beta subunit is responsible for the synthesis of L-tryptophan from indole and L-serine. The chain is Tryptophan synthase beta chain from Pyrobaculum aerophilum (strain ATCC 51768 / DSM 7523 / JCM 9630 / CIP 104966 / NBRC 100827 / IM2).